A 490-amino-acid polypeptide reads, in one-letter code: Zinc finger protein STP4 (490 aa).

Low complexity-rich tracts occupy residues 1–16 (MLVS…SVMS) and 52–73 (PSLP…STLN). The disordered stretch occupies residues 1–85 (MLVSSSFASS…PPPPLTTSYS (85 aa)). Residues Ser-153 and Ser-155 each carry the phosphoserine modification. A compositionally biased stretch (low complexity) spans 231-247 (QQQQQLNSSSSASALPS). The tract at residues 231–273 (QQQQQLNSSSSASALPSIHSPLTNEHTSRYSSSLKDSAKITKQ) is disordered. The segment covering 250-265 (SPLTNEHTSRYSSSLK) has biased composition (polar residues). The C2H2-type zinc-finger motif lies at 304-326 (HKCPICQRGFARNNDLIRHKKRH). A disordered region spans residues 338–375 (ESDNNSGADDQDDTARTSANNDSDDSNDKLAASSSSEE).

The protein resides in the cytoplasm. It is found in the mitochondrion. The protein localises to the nucleus. This is Zinc finger protein STP4 (STP4) from Saccharomyces cerevisiae (strain ATCC 204508 / S288c) (Baker's yeast).